Consider the following 254-residue polypeptide: Phosphoribosylaminoimidazole-succinocarboxamide synthase (254 aa).

It belongs to the SAICAR synthetase family.

It catalyses the reaction 5-amino-1-(5-phospho-D-ribosyl)imidazole-4-carboxylate + L-aspartate + ATP = (2S)-2-[5-amino-1-(5-phospho-beta-D-ribosyl)imidazole-4-carboxamido]succinate + ADP + phosphate + 2 H(+). The protein operates within purine metabolism; IMP biosynthesis via de novo pathway; 5-amino-1-(5-phospho-D-ribosyl)imidazole-4-carboxamide from 5-amino-1-(5-phospho-D-ribosyl)imidazole-4-carboxylate: step 1/2. In Rhizobium meliloti (strain 1021) (Ensifer meliloti), this protein is Phosphoribosylaminoimidazole-succinocarboxamide synthase.